The sequence spans 158 residues: Protein OPG060 (158 aa).

The protein belongs to the orthopoxvirus OPG058 family.

This Homo sapiens (Human) protein is Protein OPG060 (OPG060).